The chain runs to 147 residues: MMNILLINGPNLNLLGTREPEIYGNKTLIDIEKDLTKVAKEKSINIECFQSNHEGEIVDKIHDSVKSIQGILINAGAFTHTSISIRDALIGSKIPFVELHISNIFSREDFRKESFLTDKAIGIISGFGISSYFLALEGIIGYLNGKN.

The Proton acceptor role is filled by Y23. Positions 74, 80, and 87 each coordinate substrate. Catalysis depends on H100, which acts as the Proton donor. Residues 101 to 102 and R111 each bind substrate; that span reads IS.

Belongs to the type-II 3-dehydroquinase family. As to quaternary structure, homododecamer.

It carries out the reaction 3-dehydroquinate = 3-dehydroshikimate + H2O. It participates in metabolic intermediate biosynthesis; chorismate biosynthesis; chorismate from D-erythrose 4-phosphate and phosphoenolpyruvate: step 3/7. Functionally, catalyzes a trans-dehydration via an enolate intermediate. The polypeptide is 3-dehydroquinate dehydratase (Prochlorococcus marinus (strain MIT 9215)).